Consider the following 175-residue polypeptide: MQAASLAFHPPALHTSPSYFSSKLPHHLNYSLFSHTPPTSTLSLTQTLSRKSICQPRAVGKYVREDYLVKKLSAKEIQELIKGERNVPLIIDFYATWCGPCILMAQELEMLAVEYENNALIVKVDTDDEYEFARDMQVRGLPTLYFISPDSSKDAIRTEGLIPIQMMRDIINNDL.

Residues methionine 1 to serine 73 constitute a chloroplast transit peptide. In terms of domain architecture, Thioredoxin spans alanine 74 to leucine 175. Active-site nucleophile residues include cysteine 98 and cysteine 101. Cysteine 98 and cysteine 101 are disulfide-bonded.

Belongs to the thioredoxin family. Plant CITRX-type subfamily.

Its subcellular location is the plastid. The protein resides in the chloroplast. Its function is as follows. Probable thiol-disulfide oxidoreductase that may play a role in proper chloroplast development. The polypeptide is Thioredoxin-like protein CITRX, chloroplastic (Solanum tuberosum (Potato)).